The following is a 140-amino-acid chain: ISDra2 transposase TnpA (140 aa).

Mg(2+)-binding residues include His67 and His69. A mobile alpha helix region spans residues 127–133 (AQIQKYI). Tyr132 (nucleophile) is an active-site residue. A Mg(2+)-binding site is contributed by Gln136.

It belongs to the transposase 17 family. In terms of assembly, homodimer. It depends on Mg(2+) as a cofactor.

With respect to regulation, both the excision and insertion steps are inhibited by TnpB. In terms of biological role, a transposase that is part of insertion sequence (IS) element ISDra2, it is necessary and sufficient for both transposon excision and insertion of ISDra2. This protein alone can be provided in trans and allows transposition of an empty IS element (tnpA or tnpA-tnpB replaced by a selectable marker). ISDra2 binds subterminal imperfect palindromes at the left (LE) and right (RE) ends of the element and cleaves only the 'top strand' which is circularized and subsequently reinserted into the DNA target. This is called a 'peel and paste' mechanism and increases the copy number of the IS. Transposition is linked to DNA replication in the absence of irradiation, with maximal activity when the 'top strand' is on the replication lagging strand, and occurs preferentially on the lagging strand. The IS element inserts 3' of the target sequence 5'-TTGAT-3'; target duplication has not been observed. The polypeptide is ISDra2 transposase TnpA (Deinococcus radiodurans (strain ATCC 13939 / DSM 20539 / JCM 16871 / CCUG 27074 / LMG 4051 / NBRC 15346 / NCIMB 9279 / VKM B-1422 / R1)).